A 460-amino-acid chain; its full sequence is Keratin, type I cytoskeletal 27 (460 aa).

Positions 1-83 (MSVRFSSASR…GNEHGLLSGN (83 aa)) are head. The interval 84 to 119 (EKVTMQNLNDRLASYLDNVRALEEANADLEQKIKGW) is coil 1A. One can recognise an IF rod domain in the interval 84-399 (EKVTMQNLND…RLIDGEDGSC (316 aa)). Residues 120 to 141 (YEKFGPGSCRGLDHDYSRYFTV) form a linker 1 region. The interval 142–233 (IDDLRNQIIS…KNHEEEMKAL (92 aa)) is coil 1B. The interval 234–256 (QCAAGGNVNVEMNAAPGVDLTVL) is linker 12. Positions 257 to 395 (LNNMRAEYEA…ETYCRLIDGE (139 aa)) are coil 2. The segment at 396–460 (DGSCTKSKGY…NMKSEQRVPS (65 aa)) is tail. Residues 429 to 460 (DPRGKVPSSRVHTVEEKSTKVNNMKSEQRVPS) form a disordered region. Over residues 448 to 460 (KVNNMKSEQRVPS) the composition is skewed to polar residues.

The protein belongs to the intermediate filament family. In terms of assembly, heterotetramer of two type I and two type II keratins. Interacts with KRT6A to form filaments.

The protein resides in the cytoplasm. Its function is as follows. Essential for the proper assembly of type I and type II keratin protein complexes and formation of keratin intermediate filaments in the inner root sheath (irs). The sequence is that of Keratin, type I cytoskeletal 27 from Capra hircus (Goat).